The sequence spans 1204 residues: DNA-directed RNA polymerase subunit beta' (1204 aa).

Cysteine 60, cysteine 62, cysteine 75, and cysteine 78 together coordinate Zn(2+). 3 residues coordinate Mg(2+): aspartate 449, aspartate 451, and aspartate 453. Positions 819, 893, 900, and 903 each coordinate Zn(2+).

This sequence belongs to the RNA polymerase beta' chain family. As to quaternary structure, the RNAP catalytic core consists of 2 alpha, 1 beta, 1 beta' and 1 omega subunit. When a sigma factor is associated with the core the holoenzyme is formed, which can initiate transcription. Mg(2+) serves as cofactor. The cofactor is Zn(2+).

The catalysed reaction is RNA(n) + a ribonucleoside 5'-triphosphate = RNA(n+1) + diphosphate. Functionally, DNA-dependent RNA polymerase catalyzes the transcription of DNA into RNA using the four ribonucleoside triphosphates as substrates. The sequence is that of DNA-directed RNA polymerase subunit beta' from Bacillus cytotoxicus (strain DSM 22905 / CIP 110041 / 391-98 / NVH 391-98).